Consider the following 1178-residue polypeptide: Tricalbin-2 (1178 aa).

Polar residues predominate over residues 1-17; the sequence is MSPNSSKTRTDQISSMP. A disordered region spans residues 1-27; the sequence is MSPNSSKTRTDQISSMPGINEATKVES. Over 1–98 the chain is Cytoplasmic; the sequence is MSPNSSKTRT…NLLPDKFYGD (98 aa). The chain crosses the membrane as a helical span at residues 99 to 119; that stretch reads WYHEVAILIIAGLCSFVLGYF. A topological domain (extracellular) is located at residue K120. A helical transmembrane segment spans residues 121 to 141; it reads FSLASVLIVMLTTGMLYRTSS. Residues 142 to 1178 lie on the Cytoplasmic side of the membrane; the sequence is KKYRESLRDL…TGDKKSEEKQ (1037 aa). The SMP-LTD domain maps to 164 to 367; the sequence is DYESVEWLNT…PPFSLQLNIP (204 aa). C2 domains lie at 358–481, 504–628, and 632–749; these read PPFS…EKVH, PKKL…LKVT, and RPVD…DKYT. A coiled-coil region spans residues 784-821; the sequence is LSLEEAKEVDEINEKKDKLEKQKSTLDDKNISKEEKER. In terms of domain architecture, C2 4 spans 962–1086; it reads QVSWFPVTAT…DPESDTTFNI (125 aa). At S991 the chain carries Phosphoserine.

The protein belongs to the tricalbin family. Interacts with TCB1 and TCB3 via its C-terminal domain.

It is found in the cell membrane. It localises to the endoplasmic reticulum membrane. Functionally, may play a role in membrane trafficking. This Saccharomyces cerevisiae (strain ATCC 204508 / S288c) (Baker's yeast) protein is Tricalbin-2 (TCB2).